A 340-amino-acid polypeptide reads, in one-letter code: Glycerol-3-phosphate dehydrogenase [NAD(P)+] (340 aa).

Residues serine 11, tryptophan 12, arginine 33, and lysine 106 each coordinate NADPH. Positions 106, 137, and 139 each coordinate sn-glycerol 3-phosphate. Position 141 (alanine 141) interacts with NADPH. Lysine 192, aspartate 245, serine 255, arginine 256, and asparagine 257 together coordinate sn-glycerol 3-phosphate. The Proton acceptor role is filled by lysine 192. Arginine 256 contributes to the NADPH binding site. Valine 280 and glutamate 282 together coordinate NADPH.

The protein belongs to the NAD-dependent glycerol-3-phosphate dehydrogenase family.

Its subcellular location is the cytoplasm. It carries out the reaction sn-glycerol 3-phosphate + NAD(+) = dihydroxyacetone phosphate + NADH + H(+). The catalysed reaction is sn-glycerol 3-phosphate + NADP(+) = dihydroxyacetone phosphate + NADPH + H(+). It functions in the pathway membrane lipid metabolism; glycerophospholipid metabolism. Its function is as follows. Catalyzes the reduction of the glycolytic intermediate dihydroxyacetone phosphate (DHAP) to sn-glycerol 3-phosphate (G3P), the key precursor for phospholipid synthesis. In Bacillus cereus (strain ATCC 10987 / NRS 248), this protein is Glycerol-3-phosphate dehydrogenase [NAD(P)+].